The following is a 184-amino-acid chain: GTP cyclohydrolase 1 (184 aa).

The Zn(2+) site is built by cysteine 75, histidine 78, and cysteine 146.

It belongs to the GTP cyclohydrolase I family. Toroid-shaped homodecamer, composed of two pentamers of five dimers.

The catalysed reaction is GTP + H2O = 7,8-dihydroneopterin 3'-triphosphate + formate + H(+). Its pathway is cofactor biosynthesis; 7,8-dihydroneopterin triphosphate biosynthesis; 7,8-dihydroneopterin triphosphate from GTP: step 1/1. The polypeptide is GTP cyclohydrolase 1 (Streptococcus sanguinis (strain SK36)).